The following is a 330-amino-acid chain: Ribosomal RNA small subunit methyltransferase H (330 aa).

Residues 50 to 52 (GGH), D69, L103, D117, and Q124 each bind S-adenosyl-L-methionine.

It belongs to the methyltransferase superfamily. RsmH family.

It localises to the cytoplasm. The enzyme catalyses cytidine(1402) in 16S rRNA + S-adenosyl-L-methionine = N(4)-methylcytidine(1402) in 16S rRNA + S-adenosyl-L-homocysteine + H(+). Specifically methylates the N4 position of cytidine in position 1402 (C1402) of 16S rRNA. In Saccharopolyspora erythraea (strain ATCC 11635 / DSM 40517 / JCM 4748 / NBRC 13426 / NCIMB 8594 / NRRL 2338), this protein is Ribosomal RNA small subunit methyltransferase H.